The chain runs to 295 residues: Bifunctional protein FolD (295 aa).

Residues 165–167 (GRS), serine 190, and isoleucine 231 each bind NADP(+).

It belongs to the tetrahydrofolate dehydrogenase/cyclohydrolase family. In terms of assembly, homodimer.

It carries out the reaction (6R)-5,10-methylene-5,6,7,8-tetrahydrofolate + NADP(+) = (6R)-5,10-methenyltetrahydrofolate + NADPH. The catalysed reaction is (6R)-5,10-methenyltetrahydrofolate + H2O = (6R)-10-formyltetrahydrofolate + H(+). The protein operates within one-carbon metabolism; tetrahydrofolate interconversion. Catalyzes the oxidation of 5,10-methylenetetrahydrofolate to 5,10-methenyltetrahydrofolate and then the hydrolysis of 5,10-methenyltetrahydrofolate to 10-formyltetrahydrofolate. This chain is Bifunctional protein FolD, found in Nitrosomonas eutropha (strain DSM 101675 / C91 / Nm57).